A 355-amino-acid chain; its full sequence is Tryptophan--tRNA ligase (355 aa).

ATP is bound by residues 13 to 15 (QPT) and 21 to 22 (GN). A 'HIGH' region motif is present at residues 14-22 (PTGNLHLGN). L-tryptophan is bound at residue Asp-137. ATP-binding positions include 149–151 (GED), Ile-208, and 217–221 (KMSKS). The short motif at 217–221 (KMSKS) is the 'KMSKS' region element.

Belongs to the class-I aminoacyl-tRNA synthetase family. Homodimer.

The protein resides in the cytoplasm. The enzyme catalyses tRNA(Trp) + L-tryptophan + ATP = L-tryptophyl-tRNA(Trp) + AMP + diphosphate + H(+). Functionally, catalyzes the attachment of tryptophan to tRNA(Trp). This chain is Tryptophan--tRNA ligase, found in Mesorhizobium japonicum (strain LMG 29417 / CECT 9101 / MAFF 303099) (Mesorhizobium loti (strain MAFF 303099)).